We begin with the raw amino-acid sequence, 501 residues long: MDTLLKTPNKLDFFIPQFHGFERLCSNNPYHSRVRLGVKKRAIKIVSSVVSGSAALLDLVPETKKENLDFELPLYDTSKSQVVDLAIVGGGPAGLAVAQQVSEAGLSVCSIDPSPKLIWPNNYGVWVDEFEAMDLLDCLDTTWSGAVVYVDEGVKKDLSRPYGRVNRKQLKSKMLQKCITNGVKFHQSKVTNVVHEEANSTVVCSDGVKIQASVVLDATGFSRCLVQYDKPYNPGYQVAYGIVAEVDGHPFDVDKMVFMDWRDKHLDSYPELKERNSKIPTFLYAMPFSSNRIFLEETSLVARPGLRMEDIQERMAARLKHLGINVKRIEEDERCVIPMGGPLPVLPQRVVGIGGTAGMVHPSTGYMVARTLAAAPIVANAIVRYLGSPSSNSLRGDQLSAEVWRDLWPIERRRQREFFCFGMDILLKLDLDATRRFFDAFFDLQPHYWHGFLSSRLFLPELLVFGLSLFSHASNTSRLEIMTKGTVPLAKMINNLVQDRD.

The transit peptide at 1 to 48 (MDTLLKTPNKLDFFIPQFHGFERLCSNNPYHSRVRLGVKKRAIKIVSS) directs the protein to the chloroplast. V49 carries the post-translational modification N-acetylvaline. Residue 85–113 (LAIVGGGPAGLAVAQQVSEAGLSVCSIDP) participates in NAD(+) binding.

The protein belongs to the lycopene cyclase family.

It localises to the plastid. The protein resides in the chloroplast. It catalyses the reaction a carotenoid psi-end group = a carotenoid beta-end derivative. It participates in carotenoid biosynthesis; beta-carotene biosynthesis. It functions in the pathway carotenoid biosynthesis; beta-zeacarotene biosynthesis. Involved in carotenoid biosynthesis. Catalyzes the double cyclization reaction which converts lycopene to beta-carotene and neurosporene to beta-zeacarotene. Major lycopene beta-cyclase that does not seem to be involved in neoxanthin synthesis. Involved in salt tolerance improvement by increasing synthesis of carotenoids, which impairs reactive oxygen species (ROS) and protects the photosynthetic system under salt stress. This chain is Lycopene beta cyclase, chloroplastic, found in Arabidopsis thaliana (Mouse-ear cress).